A 503-amino-acid polypeptide reads, in one-letter code: Lysine--tRNA ligase (503 aa).

Mg(2+)-binding residues include glutamate 410 and glutamate 417.

Belongs to the class-II aminoacyl-tRNA synthetase family. Homodimer. Mg(2+) serves as cofactor.

It localises to the cytoplasm. The enzyme catalyses tRNA(Lys) + L-lysine + ATP = L-lysyl-tRNA(Lys) + AMP + diphosphate. This is Lysine--tRNA ligase from Prochlorococcus marinus (strain MIT 9211).